The following is a 314-amino-acid chain: 4-hydroxy-3-methylbut-2-enyl diphosphate reductase (314 aa).

Residue C12 participates in [4Fe-4S] cluster binding. H41 and H74 together coordinate (2E)-4-hydroxy-3-methylbut-2-enyl diphosphate. Residues H41 and H74 each coordinate dimethylallyl diphosphate. 2 residues coordinate isopentenyl diphosphate: H41 and H74. C96 contacts [4Fe-4S] cluster. H124 is a (2E)-4-hydroxy-3-methylbut-2-enyl diphosphate binding site. H124 is a dimethylallyl diphosphate binding site. H124 contributes to the isopentenyl diphosphate binding site. E126 functions as the Proton donor in the catalytic mechanism. A (2E)-4-hydroxy-3-methylbut-2-enyl diphosphate-binding site is contributed by T167. C197 lines the [4Fe-4S] cluster pocket. S225, S226, N227, and S269 together coordinate (2E)-4-hydroxy-3-methylbut-2-enyl diphosphate. S225, S226, N227, and S269 together coordinate dimethylallyl diphosphate. The isopentenyl diphosphate site is built by S225, S226, N227, and S269.

Belongs to the IspH family. It depends on [4Fe-4S] cluster as a cofactor.

It carries out the reaction isopentenyl diphosphate + 2 oxidized [2Fe-2S]-[ferredoxin] + H2O = (2E)-4-hydroxy-3-methylbut-2-enyl diphosphate + 2 reduced [2Fe-2S]-[ferredoxin] + 2 H(+). The catalysed reaction is dimethylallyl diphosphate + 2 oxidized [2Fe-2S]-[ferredoxin] + H2O = (2E)-4-hydroxy-3-methylbut-2-enyl diphosphate + 2 reduced [2Fe-2S]-[ferredoxin] + 2 H(+). The protein operates within isoprenoid biosynthesis; dimethylallyl diphosphate biosynthesis; dimethylallyl diphosphate from (2E)-4-hydroxy-3-methylbutenyl diphosphate: step 1/1. Its pathway is isoprenoid biosynthesis; isopentenyl diphosphate biosynthesis via DXP pathway; isopentenyl diphosphate from 1-deoxy-D-xylulose 5-phosphate: step 6/6. Catalyzes the conversion of 1-hydroxy-2-methyl-2-(E)-butenyl 4-diphosphate (HMBPP) into a mixture of isopentenyl diphosphate (IPP) and dimethylallyl diphosphate (DMAPP). Acts in the terminal step of the DOXP/MEP pathway for isoprenoid precursor biosynthesis. This is 4-hydroxy-3-methylbut-2-enyl diphosphate reductase from Actinobacillus succinogenes (strain ATCC 55618 / DSM 22257 / CCUG 43843 / 130Z).